Here is a 163-residue protein sequence, read N- to C-terminus: MSDVENQPFFNIQRVYLKDMSLEQPNSPAIFLEQDMPSVEVEVDVKADRLAESVFEVVVSGTVTAKVKDKVAFLIEAKQAGIFDIRNIPDEQLDPLVGIACPTILFPYLRSNIADAITRAGFPPIHLAEINFQALYEQRLAQLQQQAGAAGAPNGAPNGTTLN.

It belongs to the SecB family. Homotetramer, a dimer of dimers. One homotetramer interacts with 1 SecA dimer.

Its subcellular location is the cytoplasm. Functionally, one of the proteins required for the normal export of preproteins out of the cell cytoplasm. It is a molecular chaperone that binds to a subset of precursor proteins, maintaining them in a translocation-competent state. It also specifically binds to its receptor SecA. The protein is Protein-export protein SecB of Burkholderia cenocepacia (strain ATCC BAA-245 / DSM 16553 / LMG 16656 / NCTC 13227 / J2315 / CF5610) (Burkholderia cepacia (strain J2315)).